We begin with the raw amino-acid sequence, 254 residues long: N(G),N(G)-dimethylarginine dimethylaminohydrolase (254 aa).

Residues L18, D60, 65 to 66 (ED), R85, and R132 contribute to the substrate site. The active-site Proton donor is H162. H162 is a Zn(2+) binding site. A substrate-binding site is contributed by I243. C249 contacts Zn(2+). The active-site Nucleophile is C249.

Belongs to the DDAH family. As to quaternary structure, homodimer.

It catalyses the reaction N(omega),N(omega)-dimethyl-L-arginine + H2O = dimethylamine + L-citrulline. The enzyme catalyses N(omega)-methyl-L-arginine + H2O = L-citrulline + methylamine. Its activity is regulated as follows. Inhibited by zinc ions. Competitively inhibited by lysine. In terms of biological role, hydrolyzes N(G),N(G)-dimethyl-L-arginine (ADMA) and N(G)-monomethyl-L-arginine (MMA). This is N(G),N(G)-dimethylarginine dimethylaminohydrolase from Pseudomonas aeruginosa (strain ATCC 15692 / DSM 22644 / CIP 104116 / JCM 14847 / LMG 12228 / 1C / PRS 101 / PAO1).